Consider the following 414-residue polypeptide: 2,3-diketo-5-methylthiopentyl-1-phosphate enolase (414 aa).

K99 acts as the Proton acceptor in catalysis. Residues K148, 174–177 (KDDE), H265, G338, and 360–361 (GG) each bind substrate. Residues K174, D176, and E177 each contribute to the Mg(2+) site. K174 is modified (N6-carboxylysine).

The protein belongs to the RuBisCO large chain family. Type IV subfamily. As to quaternary structure, homodimer. Mg(2+) is required as a cofactor.

It carries out the reaction 5-methylsulfanyl-2,3-dioxopentyl phosphate = 2-hydroxy-5-methylsulfanyl-3-oxopent-1-enyl phosphate. It functions in the pathway amino-acid biosynthesis; L-methionine biosynthesis via salvage pathway; L-methionine from S-methyl-5-thio-alpha-D-ribose 1-phosphate: step 3/6. In terms of biological role, catalyzes the enolization of 2,3-diketo-5-methylthiopentyl-1-phosphate (DK-MTP-1-P) into 2-hydroxy-3-keto-5-methylthiopentenyl-1-phosphate (HK-MTPenyl-1-P). The polypeptide is 2,3-diketo-5-methylthiopentyl-1-phosphate enolase (Bacillus cereus (strain AH820)).